Here is an 823-residue protein sequence, read N- to C-terminus: Semaphorin-4B (823 aa).

An N-terminal signal peptide occupies residues 1-30 (MGRASRSAVLRRALLLLLLLLLLRTTTTRA). At 31–703 (LGPRISVPLG…WGADKSYWNE (673 aa)) the chain is on the extracellular side. A Sema domain is found at 34–510 (RISVPLGSEE…SHSGVVQVPV (477 aa)). N-linked (GlcNAc...) asparagine glycans are attached at residues N53, N56, and N83. A disulfide bridge connects residues C107 and C118. Residue N129 is glycosylated (N-linked (GlcNAc...) asparagine). Intrachain disulfides connect C136/C145, C273/C386, and C297/C346. N-linked (GlcNAc...) asparagine glycosylation is found at N397 and N512. In terms of domain architecture, PSI spans 512–582 (NCSLYPTCGD…RFLVPGKPCK (71 aa)). The cysteines at positions 513 and 530 are disulfide-linked. N-linked (GlcNAc...) asparagine glycans are attached at residues N567, N615, and N680. Residues 589–649 (NTVNTLACPL…FQCWSIEEGF (61 aa)) enclose the Ig-like C2-type domain. C596 and C642 are disulfide-bonded. Residues 704 to 724 (FLVMCTLFVFAMVLLFLFFLY) form a helical membrane-spanning segment. The Cytoplasmic portion of the chain corresponds to 725–823 (RHRDGMKLFL…LGSEIRDSVV (99 aa)). A phosphoserine mark is found at S779, S780, S804, and S816.

The protein belongs to the semaphorin family. As to quaternary structure, interacts with GIPC PDZ domain.

The protein resides in the membrane. Functionally, inhibits axonal extension by providing local signals to specify territories inaccessible for growing axons. This chain is Semaphorin-4B, found in Mus musculus (Mouse).